The chain runs to 135 residues: S-adenosylmethionine decarboxylase proenzyme (135 aa).

S64 (schiff-base intermediate with substrate; via pyruvic acid) is an active-site residue. A Pyruvic acid (Ser); by autocatalysis modification is found at S64. H69 functions as the Proton acceptor; for processing activity in the catalytic mechanism. C84 serves as the catalytic Proton donor; for catalytic activity.

This sequence belongs to the prokaryotic AdoMetDC family. Type 1 subfamily. Heterotetramer of two alpha and two beta chains arranged as a dimer of alpha/beta heterodimers. The cofactor is pyruvate. Is synthesized initially as an inactive proenzyme. Formation of the active enzyme involves a self-maturation process in which the active site pyruvoyl group is generated from an internal serine residue via an autocatalytic post-translational modification. Two non-identical subunits are generated from the proenzyme in this reaction, and the pyruvate is formed at the N-terminus of the alpha chain, which is derived from the carboxyl end of the proenzyme. The post-translation cleavage follows an unusual pathway, termed non-hydrolytic serinolysis, in which the side chain hydroxyl group of the serine supplies its oxygen atom to form the C-terminus of the beta chain, while the remainder of the serine residue undergoes an oxidative deamination to produce ammonia and the pyruvoyl group blocking the N-terminus of the alpha chain.

It catalyses the reaction S-adenosyl-L-methionine + H(+) = S-adenosyl 3-(methylsulfanyl)propylamine + CO2. It functions in the pathway amine and polyamine biosynthesis; S-adenosylmethioninamine biosynthesis; S-adenosylmethioninamine from S-adenosyl-L-methionine: step 1/1. Its function is as follows. Catalyzes the decarboxylation of S-adenosylmethionine to S-adenosylmethioninamine (dcAdoMet), the propylamine donor required for the synthesis of the polyamines spermine and spermidine from the diamine putrescine. In Aquifex aeolicus (strain VF5), this protein is S-adenosylmethionine decarboxylase proenzyme.